An 80-amino-acid polypeptide reads, in one-letter code: Putative UPF0377 protein YMR324C (80 aa).

Residues 13–33 (ACIFIDSVCEGIVFWGLCLFV) form a helical membrane-spanning segment.

This sequence belongs to the UPF0377 family.

The protein resides in the membrane. This is Putative UPF0377 protein YMR324C from Saccharomyces cerevisiae (strain ATCC 204508 / S288c) (Baker's yeast).